Here is a 462-residue protein sequence, read N- to C-terminus: Chromosomal replication initiator protein DnaA (462 aa).

The segment at 1–84 is domain I, interacts with DnaA modulators; it reads MAVSLWQQCI…RFDIGSRPSA (84 aa). The segment at 84–125 is domain II; sequence AKKPSVPAPIAPTRVANTQTKATVGTTFNVQAEPMANANHRS. Residues 126 to 342 form a domain III, AAA+ region region; the sequence is NINPSYQFDN…GALNRVIANA (217 aa). Residues G170, G172, K173, and T174 each contribute to the ATP site. The domain IV, binds dsDNA stretch occupies residues 343-462; it reads NFTGRPITID…YANLIRTLSS (120 aa).

The protein belongs to the DnaA family. Oligomerizes as a right-handed, spiral filament on DNA at oriC.

It is found in the cytoplasm. In terms of biological role, plays an essential role in the initiation and regulation of chromosomal replication. ATP-DnaA binds to the origin of replication (oriC) to initiate formation of the DNA replication initiation complex once per cell cycle. Binds the DnaA box (a 9 base pair repeat at the origin) and separates the double-stranded (ds)DNA. Forms a right-handed helical filament on oriC DNA; dsDNA binds to the exterior of the filament while single-stranded (ss)DNA is stabiized in the filament's interior. The ATP-DnaA-oriC complex binds and stabilizes one strand of the AT-rich DNA unwinding element (DUE), permitting loading of DNA polymerase. After initiation quickly degrades to an ADP-DnaA complex that is not apt for DNA replication. Binds acidic phospholipids. In Shewanella baltica (strain OS195), this protein is Chromosomal replication initiator protein DnaA.